The following is a 93-amino-acid chain: UPF0147 protein MM_1385 (93 aa).

This sequence belongs to the UPF0147 family.

This is UPF0147 protein MM_1385 from Methanosarcina mazei (strain ATCC BAA-159 / DSM 3647 / Goe1 / Go1 / JCM 11833 / OCM 88) (Methanosarcina frisia).